Consider the following 156-residue polypeptide: Transcriptional repressor NrdR (156 aa).

A zinc finger lies at 3-34 (CPFCQHDDTQVLDTRISEEGDSIRRRRRCVSC). Positions 49–139 (PVIVKKNGSR…VYKSFEDVAE (91 aa)) constitute an ATP-cone domain.

This sequence belongs to the NrdR family. It depends on Zn(2+) as a cofactor.

Its function is as follows. Negatively regulates transcription of bacterial ribonucleotide reductase nrd genes and operons by binding to NrdR-boxes. The polypeptide is Transcriptional repressor NrdR (Herminiimonas arsenicoxydans).